The chain runs to 208 residues: UPF0711 protein C18orf21 homolog (208 aa).

Residues 123–137 (SKHKSTPGSASKHRT) are compositionally biased toward basic residues. 2 disordered regions span residues 123 to 180 (SKHK…KSSP) and 189 to 208 (MLENKQQGKKGGLKDFLSSL). The segment covering 138–152 (PQTVNWATPKSVANR) has biased composition (polar residues). A compositionally biased stretch (low complexity) spans 153–180 (TPSSTPRSASSNTSSSSSSKSSSVKSSP).

The protein belongs to the UPF0711 family.

The protein is UPF0711 protein C18orf21 homolog of Danio rerio (Zebrafish).